We begin with the raw amino-acid sequence, 148 residues long: Large-conductance mechanosensitive channel (148 aa).

2 helical membrane passes run 16–36 and 89–109; these read VMDL…VNSI and GSFI…FLMV.

The protein belongs to the MscL family. In terms of assembly, homopentamer.

Its subcellular location is the cell inner membrane. Its function is as follows. Channel that opens in response to stretch forces in the membrane lipid bilayer. May participate in the regulation of osmotic pressure changes within the cell. The chain is Large-conductance mechanosensitive channel from Paraburkholderia phytofirmans (strain DSM 17436 / LMG 22146 / PsJN) (Burkholderia phytofirmans).